Here is a 478-residue protein sequence, read N- to C-terminus: Protein nucleotidyltransferase YdiU (478 aa).

G84, G86, R87, K107, D119, G120, R170, and R177 together coordinate ATP. Catalysis depends on D246, which acts as the Proton acceptor. Mg(2+)-binding residues include N247 and D256. D256 is a binding site for ATP.

Belongs to the SELO family. It depends on Mg(2+) as a cofactor. Requires Mn(2+) as cofactor.

It carries out the reaction L-seryl-[protein] + ATP = 3-O-(5'-adenylyl)-L-seryl-[protein] + diphosphate. It catalyses the reaction L-threonyl-[protein] + ATP = 3-O-(5'-adenylyl)-L-threonyl-[protein] + diphosphate. The enzyme catalyses L-tyrosyl-[protein] + ATP = O-(5'-adenylyl)-L-tyrosyl-[protein] + diphosphate. The catalysed reaction is L-histidyl-[protein] + UTP = N(tele)-(5'-uridylyl)-L-histidyl-[protein] + diphosphate. It carries out the reaction L-seryl-[protein] + UTP = O-(5'-uridylyl)-L-seryl-[protein] + diphosphate. It catalyses the reaction L-tyrosyl-[protein] + UTP = O-(5'-uridylyl)-L-tyrosyl-[protein] + diphosphate. Its function is as follows. Nucleotidyltransferase involved in the post-translational modification of proteins. It can catalyze the addition of adenosine monophosphate (AMP) or uridine monophosphate (UMP) to a protein, resulting in modifications known as AMPylation and UMPylation. This is Protein nucleotidyltransferase YdiU from Escherichia coli O17:K52:H18 (strain UMN026 / ExPEC).